Reading from the N-terminus, the 146-residue chain is Hemoglobin subunit beta-1 (146 aa).

Positions 2 to 146 (EWTDQERATI…VVSALGKQYH (145 aa)) constitute a Globin domain. Heme b is bound by residues His63 and His92.

This sequence belongs to the globin family. In terms of assembly, hb1 is a heterotetramer of two alpha-1 chains and two beta-1 chains. Hb2 is a heterotetramer of two alpha-2 chains and two beta-1 chains. HbC is a heterotetramer of two alpha-1 chains and two beta-2 chains. Red blood cells.

Involved in oxygen transport from gills to the various peripheral tissues. This Eleginops maclovinus (Patagonian blennie) protein is Hemoglobin subunit beta-1.